A 228-amino-acid chain; its full sequence is Cytochrome c oxidase subunit 2 (228 aa).

The Mitochondrial intermembrane segment spans residues 1–26; sequence MATWANLGLQNSSSPLMEQLNFFHDH. Residues 27–48 form a helical membrane-spanning segment; the sequence is TVLILIMITVMITYVMGMLFFN. Topologically, residues 49-62 are mitochondrial matrix; it reads KFTNRYLLHGQTIE. The helical transmembrane segment at 63–82 threads the bilayer; sequence IIWTILPAIILMFIAFPSLR. Residues 83–228 lie on the Mitochondrial intermembrane side of the membrane; the sequence is LLYLLDEINS…FIKWVSSQLN (146 aa). Cu cation contacts are provided by histidine 161, cysteine 196, glutamate 198, cysteine 200, histidine 204, and methionine 207. Glutamate 198 serves as a coordination point for Mg(2+).

It belongs to the cytochrome c oxidase subunit 2 family. As to quaternary structure, component of the cytochrome c oxidase (complex IV, CIV), a multisubunit enzyme composed of a catalytic core of 3 subunits and several supernumerary subunits. The complex exists as a monomer or a dimer and forms supercomplexes (SCs) in the inner mitochondrial membrane with ubiquinol-cytochrome c oxidoreductase (cytochrome b-c1 complex, complex III, CIII). It depends on Cu cation as a cofactor.

It is found in the mitochondrion inner membrane. It carries out the reaction 4 Fe(II)-[cytochrome c] + O2 + 8 H(+)(in) = 4 Fe(III)-[cytochrome c] + 2 H2O + 4 H(+)(out). Functionally, component of the cytochrome c oxidase, the last enzyme in the mitochondrial electron transport chain which drives oxidative phosphorylation. The respiratory chain contains 3 multisubunit complexes succinate dehydrogenase (complex II, CII), ubiquinol-cytochrome c oxidoreductase (cytochrome b-c1 complex, complex III, CIII) and cytochrome c oxidase (complex IV, CIV), that cooperate to transfer electrons derived from NADH and succinate to molecular oxygen, creating an electrochemical gradient over the inner membrane that drives transmembrane transport and the ATP synthase. Cytochrome c oxidase is the component of the respiratory chain that catalyzes the reduction of oxygen to water. Electrons originating from reduced cytochrome c in the intermembrane space (IMS) are transferred via the dinuclear copper A center (CU(A)) of subunit 2 and heme A of subunit 1 to the active site in subunit 1, a binuclear center (BNC) formed by heme A3 and copper B (CU(B)). The BNC reduces molecular oxygen to 2 water molecules using 4 electrons from cytochrome c in the IMS and 4 protons from the mitochondrial matrix. This is Cytochrome c oxidase subunit 2 (COII) from Culex quinquefasciatus (Southern house mosquito).